A 357-amino-acid polypeptide reads, in one-letter code: Deoxyuridylate hydroxymethyltransferase (357 aa).

The protein belongs to the thymidylate synthase family.

The catalysed reaction is dUMP + (6R)-5,10-methylene-5,6,7,8-tetrahydrofolate + H2O = 5-hydroxymethyl-dUMP + (6S)-5,6,7,8-tetrahydrofolate. Catalyzes formation of 5-hydroxymethyldeoxyuridylate (5HMdUMP) as a step in the pathway that replaces dTMP by thymidine hypermodifications in the viral genome. As a final result of the pathway of hypermodification, 5-Nalpha-putrescinylthymidine (Nalpha-PutT) substitutes for about 50% of thymidines in the viral DNA. These modifications probably prevent degradation of viral genome by the host restriction-modification antiviral defense system. This Delftia acidovorans (Pseudomonas acidovorans) protein is Deoxyuridylate hydroxymethyltransferase.